A 465-amino-acid polypeptide reads, in one-letter code: Glutamate--tRNA ligase (465 aa).

The 'HIGH' region signature appears at 11–21 (PSPTGFIHLGN). Positions 118-139 (GEKPRYDGTWRPAPGKILPPPP) are disordered. Positions 243–247 (KMSKR) match the 'KMSKS' region motif. ATP is bound at residue Lys-246.

The protein belongs to the class-I aminoacyl-tRNA synthetase family. Glutamate--tRNA ligase type 1 subfamily. As to quaternary structure, monomer.

Its subcellular location is the cytoplasm. It catalyses the reaction tRNA(Glu) + L-glutamate + ATP = L-glutamyl-tRNA(Glu) + AMP + diphosphate. Catalyzes the attachment of glutamate to tRNA(Glu) in a two-step reaction: glutamate is first activated by ATP to form Glu-AMP and then transferred to the acceptor end of tRNA(Glu). This is Glutamate--tRNA ligase from Ralstonia pickettii (strain 12J).